Reading from the N-terminus, the 120-residue chain is Ribosome-binding factor A (120 aa).

This sequence belongs to the RbfA family. As to quaternary structure, monomer. Binds 30S ribosomal subunits, but not 50S ribosomal subunits or 70S ribosomes.

The protein localises to the cytoplasm. One of several proteins that assist in the late maturation steps of the functional core of the 30S ribosomal subunit. Associates with free 30S ribosomal subunits (but not with 30S subunits that are part of 70S ribosomes or polysomes). Required for efficient processing of 16S rRNA. May interact with the 5'-terminal helix region of 16S rRNA. In Rickettsia felis (strain ATCC VR-1525 / URRWXCal2) (Rickettsia azadi), this protein is Ribosome-binding factor A.